The chain runs to 261 residues: MYLEKEQLPYFNEWAECFCQYLPDFSIRVTSRAEGSHHKIKIRLHFKGQSHFFHVVQDLNQMVNEQRHKHKNKSAANSARVPANAVYIVKLSQIDQHWFLQPPRAKGLLFEQDDDLFWPLDPRVIKLKGRPRGATTKSVLRTPKRRRVIRKKVTDITEEEEVVEAPQSSGSLNAATMRLFQQVLHQEMTPMQAQVQALQDRIDSSVVNISDNKKKVEEEGLRSFDDEFFSPKHVQAVQLSYGTRSHTPAATQRRGQGRGCG.

The span at 242-254 (GTRSHTPAATQRR) shows a compositional bias: polar residues. Positions 242–261 (GTRSHTPAATQRRGQGRGCG) are disordered.

The protein operates within secondary metabolite biosynthesis. Its function is as follows. Part of the gene cluster that mediates the biosynthesis of squalestatin S1 (SQS1, also known as zaragozic acid A), a heavily oxidized fungal polyketide that offers potent cholesterol lowering activity by targeting squalene synthase (SS). SQS1 is composed of a 2,8-dioxobicyclic[3.2.1]octane-3,4,5-tricarboxyclic acid core that is connected to two lipophilic polyketide arms. These initial steps feature the priming of an unusual benzoic acid starter unit onto the highly reducing polyketide synthase clz14, followed by oxaloacetate extension and product release to generate a tricarboxylic acid containing product. The phenylalanine ammonia lyase (PAL) clz10 and the acyl-CoA ligase clz12 are involved in transforming phenylalanine into benzoyl-CoA. The citrate synthase-like protein clz17 is involved in connecting the C-alpha-carbons of the hexaketide chain and oxaloacetate to afford the tricarboxylic acid unit. The potential hydrolytic enzymes, clz11 and clz13, are in close proximity to pks2 and may participate in product release. On the other side, the tetraketide arm is synthesized by a the squalestatin tetraketide synthase clz2 and enzymatically esterified to the core in the last biosynthetic step, by the acetyltransferase clz6. The biosynthesis of the tetraketide must involve 3 rounds of chain extension. After the first and second rounds methyl-transfer occurs, and in all rounds of extension the ketoreductase and dehydratase are active. The enoyl reductase and C-MeT of clz2 are not active in the final round of extension. The acetyltransferase clz6 appears to have a broad substrate selectivity for its acyl CoA substrate, allowing the in vitro synthesis of novel squalestatins. The biosynthesis of SQS1 requires several oxidative steps likely performed by oxidoreductases clz3, clz15 and clz16. Finally, in support of the identification of the cluster as being responsible for SQS1 production, the cluster contains a gene encoding a putative squalene synthase (SS) clz20, suggesting a likely mechanism for self-resistance. This chain is Zaragozic acid A biosynthesis cluster protein 8, found in Cochliobolus lunatus (Filamentous fungus).